An 85-amino-acid polypeptide reads, in one-letter code: Small ribosomal subunit protein bS16c (85 aa).

This sequence belongs to the bacterial ribosomal protein bS16 family.

Its subcellular location is the plastid. The protein resides in the chloroplast. The chain is Small ribosomal subunit protein bS16c from Saccharum hybrid (Sugarcane).